The primary structure comprises 498 residues: ATP synthase subunit beta, chloroplastic (498 aa).

172 to 179 (GGAGVGKT) provides a ligand contact to ATP.

The protein belongs to the ATPase alpha/beta chains family. As to quaternary structure, F-type ATPases have 2 components, CF(1) - the catalytic core - and CF(0) - the membrane proton channel. CF(1) has five subunits: alpha(3), beta(3), gamma(1), delta(1), epsilon(1). CF(0) has four main subunits: a(1), b(1), b'(1) and c(9-12).

The protein resides in the plastid. The protein localises to the chloroplast thylakoid membrane. It catalyses the reaction ATP + H2O + 4 H(+)(in) = ADP + phosphate + 5 H(+)(out). Functionally, produces ATP from ADP in the presence of a proton gradient across the membrane. The catalytic sites are hosted primarily by the beta subunits. This Gossypium hirsutum (Upland cotton) protein is ATP synthase subunit beta, chloroplastic.